A 541-amino-acid polypeptide reads, in one-letter code: Putative acyl-CoA dehydrogenase AidB (541 aa).

FAD is bound by residues 182–191 (MGMTEKQGGS), Thr-185, Ser-191, 216–218 (FFS), Ser-218, 423–433 (IWEGSGNIMCL), and Asn-429. A dsDNA-binding region spans residues 445 to 541 (VYDLLSEAFV…LLRATGGVCV (97 aa)).

It belongs to the acyl-CoA dehydrogenase family. As to quaternary structure, homotetramer. Dimer of dimers. FAD serves as cofactor.

The protein resides in the cytoplasm. Part of the adaptive DNA-repair response to alkylating agents. Could prevent alkylation damage by protecting DNA and destroying alkylating agents that have yet to reach their DNA target. Binds to double-stranded DNA with a preference for a DNA region that includes its own promoter. Shows weak isovaleryl-CoA dehydrogenase activity in vitro. This is Putative acyl-CoA dehydrogenase AidB (aidB) from Escherichia coli (strain K12).